We begin with the raw amino-acid sequence, 696 residues long: Carotenoid dioxygenase carX (696 aa).

Residues 1–16 are compositionally biased toward polar residues; it reads MKFLQQNSFTQTSMSQ. Residues 1-27 form a disordered region; it reads MKFLQQNSFTQTSMSQPHEDVSPPLRH. 4 residues coordinate Fe(2+): H244, H298, H361, and H642.

Belongs to the carotenoid oxygenase family. Fe(2+) is required as a cofactor.

The enzyme catalyses all-trans-beta-carotene + O2 = 2 all-trans-retinal. Its pathway is carotenoid biosynthesis. Functionally, carotenoid dioxygenase; part of the car gene cluster that mediates the biosynthesis of neurosporaxanthin, a carboxylic apocarotenoid acting as an essential protective pigments and leading to orange pigmentation. CarX mediates the cleavage of beta-carotene produced by carAR into retinal, the rhodopsin's chromophore that is involved in the regulation of the carotenoid biosynthetic pathway via a negative feedback mechanism. It can also convert the synthetic compound beta-apo-8'-carotenal but not C35-apocarotenoids such as the acidic apocarotenoid neurosporaxanthin (C35), as well as its corresponding aldehyde beta-apo-4'-carotenal. This Gibberella fujikuroi (strain CBS 195.34 / IMI 58289 / NRRL A-6831) (Bakanae and foot rot disease fungus) protein is Carotenoid dioxygenase carX.